Consider the following 662-residue polypeptide: ABC transporter G family member 17 (662 aa).

An ABC transporter domain is found at 22–276 (LAFNDLTYNV…FSEFGSPIPE (255 aa)). 69 to 76 (GASGAGKS) contributes to the ATP binding site. An ABC transmembrane type-2 domain is found at 356–566 (VETVILAKRY…PYEAVLHNEF (211 aa)). 6 consecutive transmembrane segments (helical) span residues 375-395 (LIGT…TVYW), 410-430 (FFSF…PAFI), 451-471 (VISH…GFAA), 486-508 (FIYY…TFVS), 514-536 (VMMS…GFYV), and 635-655 (LWVT…SLLL).

This sequence belongs to the ABC transporter superfamily. ABCG family. Eye pigment precursor importer (TC 3.A.1.204) subfamily.

It is found in the membrane. This chain is ABC transporter G family member 17 (ABCG17), found in Arabidopsis thaliana (Mouse-ear cress).